The following is a 90-amino-acid chain: Envelope glycoprotein N (90 aa).

An N-terminal signal peptide occupies residues 1 to 21 (MTWKLFICFLSFGVIFLRVSS). The Virion surface segment spans residues 22–55 (LTEKSHTTSYTILHNNNFYSNSCSADTYVPSIKT). Residues 56–76 (FSSVWAILNVIIFFCASLFYL) traverse the membrane as a helical segment. At 77-90 (RHLCIVKFISNLTK) the chain is on the intravirion side.

Belongs to the herpesviridae glycoprotein N family. As to quaternary structure, interacts (via N-terminus) with gM (via N-terminus). The gM-gN heterodimer forms the gCII complex.

Its subcellular location is the virion membrane. It is found in the host membrane. The protein resides in the host Golgi apparatus. The protein localises to the host trans-Golgi network. Its function is as follows. Envelope glycoprotein necessary for proper maturation of gM and modulation of its membrane fusion activity. Also plays a critical role in virion morphogenesis. This Saimiriine herpesvirus 2 (strain 11) (SaHV-2) protein is Envelope glycoprotein N.